Consider the following 449-residue polypeptide: Glutamyl-tRNA reductase (449 aa).

Substrate is bound by residues 58–61, Ser-121, 126–128, and Gln-132; these read TCNR and ETQ. Cys-59 serves as the catalytic Nucleophile. An NADP(+)-binding site is contributed by 203-208; it reads GLGEMA.

The protein belongs to the glutamyl-tRNA reductase family. Homodimer.

It catalyses the reaction (S)-4-amino-5-oxopentanoate + tRNA(Glu) + NADP(+) = L-glutamyl-tRNA(Glu) + NADPH + H(+). Its pathway is porphyrin-containing compound metabolism; protoporphyrin-IX biosynthesis; 5-aminolevulinate from L-glutamyl-tRNA(Glu): step 1/2. Its function is as follows. Catalyzes the NADPH-dependent reduction of glutamyl-tRNA(Glu) to glutamate 1-semialdehyde (GSA). The chain is Glutamyl-tRNA reductase from Helicobacter pylori (strain G27).